Consider the following 524-residue polypeptide: Serine/threonine-protein kinase PAK 2 (524 aa).

A disordered region spans residues 1–81 (MSDNGELEDK…PEISPPSDFE (81 aa)). Ser2 is subject to N-acetylserine. Residues Ser2, Ser20, Ser55, Ser58, and Ser59 each carry the phosphoserine modification. Thr60 carries the phosphothreonine modification. Lys62 carries the N6-acetyllysine modification. At Ser64 the chain carries Phosphoserine. Residues 67–81 (KEKERPEISPPSDFE) are compositionally biased toward basic and acidic residues. The interval 69–112 (KERPEISPPSDFEHTIHVGFDAVTGEFTGMPEQWARLLQTSNIT) is GTPase-binding. Residues 69–137 (KERPEISPPS…KFYDSNTVKQ (69 aa)) are autoregulatory region. Residues 74–87 (ISPPSDFEHTIHVG) enclose the CRIB domain. A linker region spans residues 88-248 (FDAVTGEFTG…IVSIGDPKKK (161 aa)). N6-acetyllysine is present on Lys128. Thr134 is modified (phosphothreonine). At Tyr139 the chain carries Phosphotyrosine. Ser141 carries the phosphoserine modification. Residues 142–190 (FTPPEKDGFPSGTPALNTKGSETSAVVTEEDDDDEDAAPPVIAPRPDHT) are disordered. Thr143 carries the phosphothreonine modification. The residue at position 152 (Ser152) is a Phosphoserine. Phosphothreonine occurs at positions 154, 159, and 169. Polar residues predominate over residues 155–167 (PALNTKGSETSAV). Acidic residues predominate over residues 169–178 (TEEDDDDEDA). Residue Ser197 is modified to Phosphoserine. Residues 204–228 (APVGDSNVDSGAKSSDKQKKKAKMT) form a disordered region. Residues 245-251 (PKKKYTR) carry the Nuclear localization signal motif. One can recognise a Protein kinase domain in the interval 249–500 (YTRYEKIGQG…AKELLQHPFL (252 aa)). ATP is bound by residues 255–263 (IGQGASGTV) and Lys278. Asp368 acts as the Proton acceptor in catalysis. Thr402 is subject to Phosphothreonine; by autocatalysis.

The protein belongs to the protein kinase superfamily. STE Ser/Thr protein kinase family. STE20 subfamily. Interacts tightly with GTP-bound but not GDP-bound CDC42/p21 and RAC1. Interacts with SH3MD4. Interacts with SCRIB. Interacts with ARHGEF7 and GIT1. PAK-2p34 interacts with ARHGAP10. Interacts with RAC1. Post-translationally, full-length PAK2 is autophosphorylated when activated by CDC42/p21. Following cleavage, both peptides, PAK-2p27 and PAK-2p34, become highly autophosphorylated. Autophosphorylation of PAK-2p27 can occur in the absence of any effectors and is dependent on phosphorylation of Thr-402, because PAK-2p27 is acting as an exogenous substrate. During apoptosis proteolytically cleaved by caspase-3 or caspase-3-like proteases to yield active PAK-2p34. In terms of processing, ubiquitinated, leading to its proteasomal degradation.

The protein localises to the cytoplasm. The protein resides in the nucleus. It localises to the perinuclear region. Its subcellular location is the membrane. The catalysed reaction is L-seryl-[protein] + ATP = O-phospho-L-seryl-[protein] + ADP + H(+). It catalyses the reaction L-threonyl-[protein] + ATP = O-phospho-L-threonyl-[protein] + ADP + H(+). With respect to regulation, activated by binding small G proteins. Binding of GTP-bound CDC42 or RAC1 to the autoregulatory region releases monomers from the autoinhibited dimer, enables phosphorylation of Thr-402 and allows the kinase domain to adopt an active structure. Following caspase cleavage, autophosphorylated PAK-2p34 is constitutively active. Serine/threonine protein kinase that plays a role in a variety of different signaling pathways including cytoskeleton regulation, cell motility, cell cycle progression, apoptosis or proliferation. Acts as a downstream effector of the small GTPases CDC42 and RAC1. Activation by the binding of active CDC42 and RAC1 results in a conformational change and a subsequent autophosphorylation on several serine and/or threonine residues. Full-length PAK2 stimulates cell survival and cell growth. Phosphorylates MAPK4 and MAPK6 and activates the downstream target MAPKAPK5, a regulator of F-actin polymerization and cell migration. Phosphorylates JUN and plays an important role in EGF-induced cell proliferation. Phosphorylates many other substrates including histone H4 to promote assembly of H3.3 and H4 into nucleosomes, BAD, ribosomal protein S6, or MBP. Phosphorylates CASP7, thereby preventing its activity. Additionally, associates with ARHGEF7 and GIT1 to perform kinase-independent functions such as spindle orientation control during mitosis. On the other hand, apoptotic stimuli such as DNA damage lead to caspase-mediated cleavage of PAK2, generating PAK-2p34, an active p34 fragment that translocates to the nucleus and promotes cellular apoptosis involving the JNK signaling pathway. Caspase-activated PAK2 phosphorylates MKNK1 and reduces cellular translation. The polypeptide is Serine/threonine-protein kinase PAK 2 (Pak2) (Rattus norvegicus (Rat)).